A 250-amino-acid polypeptide reads, in one-letter code: Tetrahydromethanopterin S-methyltransferase subunit D (250 aa).

6 consecutive transmembrane segments (helical) span residues 9-29, 47-67, 86-106, 144-164, 184-204, and 230-250; these read IIWMALITIGGVLISWSVHFV, GTVQLAAGAGLTGLVSAGFMM, IMIAVTMIVGSIVYVYGVGVV, IIGGGLGGIGGSLVYYSLIEV, LVAVAAIFAIGIFFVNAVIPS, and LVASIMCAIVAVVAIAQLGGI.

It belongs to the MtrD family. As to quaternary structure, the complex is composed of 8 subunits; MtrA, MtrB, MtrC, MtrD, MtrE, MtrF, MtrG and MtrH.

The protein resides in the cell membrane. The enzyme catalyses 5-methyl-5,6,7,8-tetrahydromethanopterin + coenzyme M + 2 Na(+)(in) = 5,6,7,8-tetrahydromethanopterin + methyl-coenzyme M + 2 Na(+)(out). It functions in the pathway one-carbon metabolism; methanogenesis from CO(2); methyl-coenzyme M from 5,10-methylene-5,6,7,8-tetrahydromethanopterin: step 2/2. In terms of biological role, part of a complex that catalyzes the formation of methyl-coenzyme M and tetrahydromethanopterin from coenzyme M and methyl-tetrahydromethanopterin. This is an energy-conserving, sodium-ion translocating step. The sequence is that of Tetrahydromethanopterin S-methyltransferase subunit D from Methanosarcina barkeri (strain Fusaro / DSM 804).